A 573-amino-acid polypeptide reads, in one-letter code: 2-succinyl-5-enolpyruvyl-6-hydroxy-3-cyclohexene-1-carboxylate synthase (573 aa).

The protein belongs to the TPP enzyme family. MenD subfamily. As to quaternary structure, homodimer. Requires Mg(2+) as cofactor. The cofactor is Mn(2+). Thiamine diphosphate is required as a cofactor.

The enzyme catalyses isochorismate + 2-oxoglutarate + H(+) = 5-enolpyruvoyl-6-hydroxy-2-succinyl-cyclohex-3-ene-1-carboxylate + CO2. It functions in the pathway quinol/quinone metabolism; 1,4-dihydroxy-2-naphthoate biosynthesis; 1,4-dihydroxy-2-naphthoate from chorismate: step 2/7. Its pathway is quinol/quinone metabolism; menaquinone biosynthesis. Catalyzes the thiamine diphosphate-dependent decarboxylation of 2-oxoglutarate and the subsequent addition of the resulting succinic semialdehyde-thiamine pyrophosphate anion to isochorismate to yield 2-succinyl-5-enolpyruvyl-6-hydroxy-3-cyclohexene-1-carboxylate (SEPHCHC). The sequence is that of 2-succinyl-5-enolpyruvyl-6-hydroxy-3-cyclohexene-1-carboxylate synthase from Shewanella baltica (strain OS185).